The primary structure comprises 312 residues: Ribosomal RNA small subunit methyltransferase H (312 aa).

Residues 33–35 (SGH), aspartate 53, phenylalanine 80, aspartate 101, and glutamine 108 contribute to the S-adenosyl-L-methionine site.

It belongs to the methyltransferase superfamily. RsmH family.

Its subcellular location is the cytoplasm. The enzyme catalyses cytidine(1402) in 16S rRNA + S-adenosyl-L-methionine = N(4)-methylcytidine(1402) in 16S rRNA + S-adenosyl-L-homocysteine + H(+). Specifically methylates the N4 position of cytidine in position 1402 (C1402) of 16S rRNA. This is Ribosomal RNA small subunit methyltransferase H from Desulforapulum autotrophicum (strain ATCC 43914 / DSM 3382 / VKM B-1955 / HRM2) (Desulfobacterium autotrophicum).